The primary structure comprises 144 residues: MISINFNFLKIKGIINMNINRPISPHLTIYKLQITNTLSIFHRITGGVLALTLCFFILILKMLNFHLSSYAFYSIAYTLNQYSGFLFIAISFFLLLFIFYHLFAGLRHLVWDAGYALEIENVYLTGYIMLGLAFLFTLIAWIIF.

A run of 3 helical transmembrane segments spans residues I40–L60, G84–A104, and L124–F144. Residue H101 coordinates heme.

Belongs to the cytochrome b560 family. In terms of assembly, forms part of complex II containing four subunits: a 70 kDa flavoprotein (FP), a 27 kDa iron-sulfur protein (IP), a cytochrome B and a membrane-anchoring protein. It depends on heme as a cofactor.

Its subcellular location is the mitochondrion inner membrane. Its pathway is carbohydrate metabolism; tricarboxylic acid cycle. In terms of biological role, membrane-anchoring subunit of succinate dehydrogenase (SDH) that is involved in complex II of the mitochondrial electron transport chain and is responsible for transferring electrons from succinate to ubiquinone (coenzyme Q). This chain is Succinate dehydrogenase cytochrome b560 subunit (SDH3), found in Reclinomonas americana.